Here is a 1347-residue protein sequence, read N- to C-terminus: MENLPFPLKLLSASSLNAPSSTPWVLDIFLTLVFALGFFFLLLPYLSYFRCDDPPSPSPGKRKCPVGRRRRPRGRMKNHSLRAGRECRRGLEETSDLLSQLQSLLGPHLDKGDFGQLSGPDPPGEVGERAPDGASQSSHEPMEDAAPILSPLASPDPQAKHPQDLASTPSPGPMTTSVSSLSASQPPEPSLPLEHPSPEPPALFPHPPHTPDPLACSLPPPKGFTAPPLRDSTLITPSHCDSVAFPLGTVPQSLSPHEDLVASVPAISGLGGSNSHVSASSRWQETARTSCAFNSSVQQDHLSRHPPETCQMEAGSLFLLSSDGQNVVGIQVTETAKVNIWEEKENVGSFTNRMTPEKHLNSLRNLAKSLDAEQDTTNPKPFWNMGENSKQLPGPQKLSDPRLWQESFWKNYSQLFWGLPSLHSESLVANAWVTDRSYTLQSPPFLFNEMSNVCPIQRETTMSPLLFQAQPLSHLGPECQPFISSTPQFRPTPMAQAEAQAHLQSSFPVLSPAFPSLIQNTGVACPASQNKVQALSLPETQHPEWPLLRRQLEGRLALPSRVQKSQDVFSVSTPNLPQESLTSILPENFPVSPELRRQLEQHIKKWIIQHWGNLGRIQESLDLMQLRDESPGTSQAKGKPSPWQSSMSTGEGSKEAQKVKFQLERDPCPHLGQILGETPQNLSRDMKSFPRKVLGVTSEELERNLRKPLRSDSGSDLLRCTERTHIENILKAHMGRNLGQTNEGLIPVCVRRSWLAVNQALPVSNTHVKTSNLAAPKSGKACVNTAQVLSFLEPCTQQGLGAHIVRFWAKHRWGLPLRVLKPIQCFKLEKVSSLSLTQLAGPSSATCESGAGSEVEVDMFLRKPPMASLRKQVLTKASDHMPESLLASSPAWKQFQRAPRGIPSWNDHEPLKPPPAGQEGRWPSKPLTYSLTGSIQQSRSLGAQSSKAGETREAVPQCRVPLETCMLANLQATSEDVHGFEAPGTSKSSLHPRVSVSQDPRKLCLMEEVVNEFEPGMATKSETQPQVCAAVVLLPDGQASVVPHASENLVSQVPQGHLQSMPTGNMRASQELHDLMAARRSKLVHEEPRNPNCQGSCKSQRPMFPPIHKSEKSRKPNLEKHEERLEGLRTPQLTPVRKTEDTHQDEGVQLLPSKKQPPSVSPFGENIKQIFQWIFSKKKSKPAPVTAESQKTVKNRSRVYSSSAEAQGLMTAVGQMLDEKMSLCHARHASKVNQHKQKFQAPVCGFPCNHRHLFYSEHGRILSYAASSQQATLKSQGCPNRDRQIRNQQPLKSVRCNNEQWGLRHPQILHPKKAVSPVSPPQHWPKTSGASSHHHHCPRHCLLWEGI.

A helical membrane pass occupies residues 23 to 43 (PWVLDIFLTLVFALGFFFLLL). 7 disordered regions span residues 55–87 (PSPSPGKRKCPVGRRRRPRGRMKNHSLRAGREC), 106–233 (GPHL…RDST), 373–397 (EQDTTNPKPFWNMGENSKQLPGPQK), 628–657 (DESPGTSQAKGKPSPWQSSMSTGEGSKEAQ), 900–955 (RGIP…REAV), 1084–1161 (VHEE…PSVS), and 1313–1335 (KAVSPVSPPQHWPKTSGASSHHH). A compositionally biased stretch (basic residues) spans 60 to 82 (GKRKCPVGRRRRPRGRMKNHSLR). The segment covering 165–178 (LASTPSPGPMTTSV) has biased composition (polar residues). Residues 198–211 (PEPPALFPHPPHTP) show a composition bias toward pro residues. Composition is skewed to polar residues over residues 631–651 (PGTSQAKGKPSPWQSSMSTGE) and 927–948 (LTYSLTGSIQQSRSLGAQSSKA). 2 stretches are compositionally biased toward basic and acidic residues: residues 1108 to 1127 (HKSEKSRKPNLEKHEERLEG) and 1137 to 1146 (RKTEDTHQDE).

Belongs to the SPATA31 family.

It is found in the membrane. May play a role in spermatogenesis. The chain is Spermatogenesis-associated protein 31A5 (SPATA31A5) from Homo sapiens (Human).